A 151-amino-acid polypeptide reads, in one-letter code: Ribosome maturation factor RimP (151 aa).

Belongs to the RimP family.

The protein localises to the cytoplasm. Its function is as follows. Required for maturation of 30S ribosomal subunits. In Thermoanaerobacter pseudethanolicus (strain ATCC 33223 / 39E) (Clostridium thermohydrosulfuricum), this protein is Ribosome maturation factor RimP.